The sequence spans 284 residues: NH(3)-dependent NAD(+) synthetase (284 aa).

Gly41–Ser48 is a binding site for ATP. A Mg(2+)-binding site is contributed by Asp47. A deamido-NAD(+)-binding site is contributed by Arg127. Residue Thr147 coordinates ATP. Position 152 (Glu152) interacts with Mg(2+). A deamido-NAD(+)-binding site is contributed by Asp167. Positions 176 and 199 each coordinate ATP. The interval Phe264–Gly284 is disordered. The segment covering Pro275–Gly284 has biased composition (acidic residues).

The protein belongs to the NAD synthetase family. Homodimer.

The catalysed reaction is deamido-NAD(+) + NH4(+) + ATP = AMP + diphosphate + NAD(+) + H(+). The protein operates within cofactor biosynthesis; NAD(+) biosynthesis; NAD(+) from deamido-NAD(+) (ammonia route): step 1/1. Functionally, catalyzes the ATP-dependent amidation of deamido-NAD to form NAD. Uses ammonia as a nitrogen source. The polypeptide is NH(3)-dependent NAD(+) synthetase (Methanopyrus kandleri (strain AV19 / DSM 6324 / JCM 9639 / NBRC 100938)).